Here is a 328-residue protein sequence, read N- to C-terminus: COP9 signalosome complex subunit 6 (328 aa).

In terms of domain architecture, MPN spans Val-42–Ile-175.

The protein belongs to the peptidase M67A family. CSN6 subfamily. Component of the CSN complex, composed of COPS1/GPS1, COPS2, COPS3, COPS4, COPS5, COPS6, COPS7 (COPS7A or COPS7B), COPS8 and COPS9. In the complex, it probably interacts directly with COPS2, COPS4, COPS5, COPS7 (COPS7A or COPS7B) and COPS9. Interacts with the translation initiation factor EIF3S6. Interacts weakly with RBX1. Directly interacts with COP1 and 14-3-3 protein sigma/SFN. Interacts with ERCC6.

The protein resides in the cytoplasm. Its subcellular location is the nucleus. In terms of biological role, component of the COP9 signalosome complex (CSN), a complex involved in various cellular and developmental processes. The CSN complex is an essential regulator of the ubiquitin (Ubl) conjugation pathway by mediating the deneddylation of the cullin subunits of SCF-type E3 ligase complexes, leading to decrease the Ubl ligase activity of SCF-type complexes such as SCF, CSA or DDB2. The complex is also involved in phosphorylation of p53/TP53, c-jun/JUN, IkappaBalpha/NFKBIA, ITPK1 and IRF8, possibly via its association with CK2 and PKD kinases. CSN-dependent phosphorylation of TP53 and JUN promotes and protects degradation by the Ubl system, respectively. Has some glucocorticoid receptor-responsive activity. Stabilizes COP1 through reducing COP1 auto-ubiquitination and decelerating COP1 turnover rate, hence regulates the ubiquitination of COP1 targets, including SFN. In Pongo abelii (Sumatran orangutan), this protein is COP9 signalosome complex subunit 6 (COPS6).